Here is a 111-residue protein sequence, read N- to C-terminus: Integration host factor subunit alpha (111 aa).

The protein belongs to the bacterial histone-like protein family. As to quaternary structure, heterodimer of an alpha and a beta chain.

Functionally, this protein is one of the two subunits of integration host factor, a specific DNA-binding protein that functions in genetic recombination as well as in transcriptional and translational control. The polypeptide is Integration host factor subunit alpha (Polaromonas sp. (strain JS666 / ATCC BAA-500)).